The sequence spans 180 residues: Symerythrin (180 aa).

A cross-link (3-(L-phenylalan-2'-yl)-L-valine (Phe-Val)) is located at residues 17–127 (FQDAVSHNNT…RRALETALEV (111 aa)). Residues 21–180 (VSHNNTDANA…RALENLLEVA (160 aa)) enclose the Ferritin-like diiron domain. 7 residues coordinate Fe(3+): Glu37, Glu40, Glu71, Glu128, Glu131, Glu162, and His165.

As to quaternary structure, monomer. It depends on Fe(3+) as a cofactor.

Its subcellular location is the plastid. The protein localises to the cyanelle. Its function is as follows. Exhibits oxidase-like and peroxidase-like activities in vitro. In Cyanophora paradoxa, this protein is Symerythrin.